The chain runs to 364 residues: Palmitoyltransferase ZDHHC9 (364 aa).

The Cytoplasmic portion of the chain corresponds to Met1–Lys35. The chain crosses the membrane as a helical span at residues Gly36–Glu56. The Lumenal portion of the chain corresponds to Cys57 to Gln63. The chain crosses the membrane as a helical span at residues Leu64–Leu84. Over Arg85–Tyr183 the chain is Cytoplasmic. Residues Lys139–Leu189 form the DHHC domain. Residue Cys169 is the S-palmitoyl cysteine intermediate of the active site. The helical transmembrane segment at Phe184 to Val204 threads the bilayer. Topologically, residues Tyr205–Glu228 are lumenal. Residues Val229–Leu249 form a helical membrane-spanning segment. Residues Val250–Lys364 are Cytoplasmic-facing. Residues Pro303–Lys364 form a disordered region. Polar residues predominate over residues Arg310–Glu336. Residues Glu346–Pro356 are compositionally biased toward pro residues.

Belongs to the DHHC palmitoyltransferase family. ERF2/ZDHHC9 subfamily. In terms of assembly, interacts with GOLGA7.

The protein resides in the endoplasmic reticulum membrane. It is found in the golgi apparatus membrane. The enzyme catalyses L-cysteinyl-[protein] + hexadecanoyl-CoA = S-hexadecanoyl-L-cysteinyl-[protein] + CoA. Its function is as follows. Palmitoyltransferase that catalyzes the addition of palmitate onto various protein substrates, such as ADRB2, GSDMD, HRAS, NRAS and CGAS. The ZDHHC9-GOLGA7 complex is a palmitoyltransferase specific for HRAS and NRAS. May have a palmitoyltransferase activity toward the beta-2 adrenergic receptor/ADRB2 and therefore regulate G protein-coupled receptor signaling. Acts as a regulator of innate immunity by catalyzing palmitoylation of CGAS, thereby promoting CGAS homodimerization and cyclic GMP-AMP synthase activity. Activates pyroptosis by catalyzing palmitoylation of gasdermin-D (GSDMD), thereby promoting membrane translocation and pore formation of GSDMD. The chain is Palmitoyltransferase ZDHHC9 (Zdhhc9) from Mus musculus (Mouse).